Consider the following 401-residue polypeptide: Chromate transport protein (401 aa).

Transmembrane regions (helical) follow at residues 26 to 46, 67 to 87, 93 to 113, 124 to 144, 172 to 192, 214 to 234, 237 to 257, 272 to 294, 299 to 321, 330 to 350, 356 to 376, and 379 to 399; these read LVMYFLRLGTLGFGGPVALAG, GLALAQLAPGPLAAQLAIYLG, IVGATLVGVAFVLPSFLMVLA, LTWMQSVFYGVGAAVIGIIAI, VITESEVAWLFLAAGVLVWFW, AASGMMSTLDWPLLSQIGVFF, AGAFVFGSGLAIVPFLYGGVV, VAVAMITPGPVVITVGFIGYLVA, ACVAAAATFLPCYLFTVLPAPYF, ILAFVDGVTAAAIGAITGAVI, SIVDIPTALLALVTVALLLKF, and LSEPMIVAGAALIGLVAYPLL.

This sequence belongs to the chromate ion transporter (CHR) (TC 2.A.51) family.

The protein resides in the cell inner membrane. Its function is as follows. This protein reduces chromate accumulation and is essential for chromate resistance. The sequence is that of Chromate transport protein from Cupriavidus metallidurans (strain ATCC 43123 / DSM 2839 / NBRC 102507 / CH34) (Ralstonia metallidurans).